A 462-amino-acid chain; its full sequence is Probable acid phosphatase SPBC4.06 (462 aa).

The Nucleophile role is filled by histidine 35. The Proton donor role is filled by aspartate 330.

Belongs to the histidine acid phosphatase family.

It is found in the mitochondrion. It catalyses the reaction a phosphate monoester + H2O = an alcohol + phosphate. The chain is Probable acid phosphatase SPBC4.06 from Schizosaccharomyces pombe (strain 972 / ATCC 24843) (Fission yeast).